Consider the following 137-residue polypeptide: Cellular retinoic acid-binding protein 1 (137 aa).

The Nuclear localization signal motif lies at Arg-21 to Lys-31. Arg-132–Tyr-134 contacts all-trans-retinoate.

This sequence belongs to the calycin superfamily. Fatty-acid binding protein (FABP) family.

Its subcellular location is the cytoplasm. Cytosolic CRABPs may regulate the access of retinoic acid to the nuclear retinoic acid receptors. In Pelodiscus sinensis (Chinese softshell turtle), this protein is Cellular retinoic acid-binding protein 1 (CRABP1).